Consider the following 359-residue polypeptide: Chorismate synthase (359 aa).

Residues R48 and R54 each contribute to the NADP(+) site. FMN contacts are provided by residues 129–131, 241–242, G285, 300–304, and R326; these read RSS, NA, and KPTSS.

Belongs to the chorismate synthase family. In terms of assembly, homotetramer. It depends on FMNH2 as a cofactor.

The enzyme catalyses 5-O-(1-carboxyvinyl)-3-phosphoshikimate = chorismate + phosphate. Its pathway is metabolic intermediate biosynthesis; chorismate biosynthesis; chorismate from D-erythrose 4-phosphate and phosphoenolpyruvate: step 7/7. Catalyzes the anti-1,4-elimination of the C-3 phosphate and the C-6 proR hydrogen from 5-enolpyruvylshikimate-3-phosphate (EPSP) to yield chorismate, which is the branch point compound that serves as the starting substrate for the three terminal pathways of aromatic amino acid biosynthesis. This reaction introduces a second double bond into the aromatic ring system. This chain is Chorismate synthase, found in Afipia carboxidovorans (strain ATCC 49405 / DSM 1227 / KCTC 32145 / OM5) (Oligotropha carboxidovorans).